Here is a 43-residue protein sequence, read N- to C-terminus: Probable intron-encoded DNA endonuclease 2 (43 aa).

This sequence belongs to the LAGLIDADG endonuclease family.

The protein resides in the mitochondrion. In terms of biological role, mitochondrial DNA endonuclease involved in intron homing. This chain is Probable intron-encoded DNA endonuclease 2 (hegI2), found in Mycosarcoma maydis (Corn smut fungus).